Consider the following 438-residue polypeptide: Plasmalemma vesicle-associated protein (438 aa).

Topologically, residues 1 to 26 are cytoplasmic; sequence MGLSMDRSPYARTGDQQRGCWYYLRY. Residues 27–47 traverse the membrane as a helical; Signal-anchor for type II membrane protein segment; it reads FFLFVSLIQFLIILGLVLFMI. Over 48–438 the chain is Extracellular; the sequence is YGNVHATTES…VVNPAAQPSG (391 aa). N-linked (GlcNAc...) asparagine glycosylation is found at Asn-82, Asn-88, Asn-112, and Asn-150. 3 coiled-coil regions span residues 140–160, 189–224, and 281–383; these read KQCQ…LFKL, KRQT…QSLC, and EELA…ISAL. Positions 391–413 are disordered; it reads SLPAVPPRVSGPPPNPPPIDPAS. Positions 394–410 are enriched in pro residues; that stretch reads AVPPRVSGPPPNPPPID.

Homodimer. As to expression, expressed in lung, kidney, spleen, heart, muscle, eye, pancreas, thyroid, thymus, submaxillary gland, prostate, epididymis, uterus and liver.

The protein localises to the cell membrane. It is found in the membrane. Its subcellular location is the caveola. It localises to the cytoplasm. The protein resides in the perinuclear region. In terms of biological role, endothelial cell-specific membrane protein involved in the formation of the diaphragms that bridge endothelial fenestrae. It is also required for the formation of stomata of caveolae and transendothelial channels. Functions in microvascular permeability, endothelial fenestrae contributing to the passage of water and solutes and regulating transcellular versus paracellular flow in different organs. Plays a specific role in embryonic development. This is Plasmalemma vesicle-associated protein (Plvap) from Mus musculus (Mouse).